Reading from the N-terminus, the 305-residue chain is Olfactory receptor 9G19 (305 aa).

Topologically, residues 1–24 (MDQNNNTVSEFIMLGFTTDPVIQK) are extracellular. The chain crosses the membrane as a helical span at residues 25–45 (VLFAVFLVVYTLTLMGNSSLI). The Cytoplasmic segment spans residues 46-55 (MLICNDSRLH). The helical transmembrane segment at 56–76 (TPMYFFIGNLSFLDLGLSSVY) threads the bilayer. The Extracellular segment spans residues 77–96 (TPKILETCISEDKSISFAGC). An intrachain disulfide couples Cys96 to Cys178. The chain crosses the membrane as a helical span at residues 97–117 (VAQFFFSAALDYTECYLLAAM). At 118–138 (AYDRYVAISKPLLYSQAMSLK) the chain is on the cytoplasmic side. The helical transmembrane segment at 139 to 159 (LCVCFVVASYVGGFINSVIIT) threads the bilayer. Topologically, residues 160 to 204 (KDTFALTFCNDNVIDDFFCDIPPLVKLACGKKKSFQSVLFFLLTS) are extracellular. A helical transmembrane segment spans residues 205 to 225 (NVIIPIVFILATYLFIIATIL). Over 226–236 (RIRSTQGRLKA) the chain is Cytoplasmic. The helical transmembrane segment at 237 to 257 (FSTCSSHLISVTLYYGSILYI) threads the bilayer. At 258 to 270 (YARPRSSYSLDRD) the chain is on the extracellular side. A helical transmembrane segment spans residues 271-291 (KIVSTFYTVVFPMLNPLIYSL). The Cytoplasmic portion of the chain corresponds to 292–305 (RNKDVKEALNKLLK).

It belongs to the G-protein coupled receptor 1 family.

The protein resides in the cell membrane. Its function is as follows. Odorant receptor. The polypeptide is Olfactory receptor 9G19 (Mus musculus (Mouse)).